The sequence spans 203 residues: Tic20 family protein Ycf60 (203 aa).

Transmembrane regions (helical) follow at residues 2 to 22, 51 to 71, 84 to 104, 131 to 151, and 153 to 173; these read IRLF…RLAL, TVPY…YVLP, IILP…VTFF, ILLF…PIEF, and ISFL…STIT.

Belongs to the Tic20 family.

The protein localises to the plastid. Its subcellular location is the chloroplast membrane. This Pyropia yezoensis (Susabi-nori) protein is Tic20 family protein Ycf60 (ycf60).